The primary structure comprises 139 residues: Acyl carrier protein 4, chloroplastic (139 aa).

A chloroplast-targeting transit peptide spans 1–55 (MASAAAGASICIKSASCSPLAPGRISSLRSVSLPVSRKSFPSLRSSKGSFARVSC). A Carrier domain is found at 59–134 (PETVAKVCRI…DAADLIEKLM (76 aa)). At serine 94 the chain carries O-(pantetheine 4'-phosphoryl)serine.

It belongs to the acyl carrier protein (ACP) family. In terms of processing, 4'-phosphopantetheine is transferred from CoA to a specific serine of apo-ACP by acpS. This modification is essential for activity because fatty acids are bound in thioester linkage to the sulfhydryl of the prosthetic group.

It is found in the plastid. The protein localises to the chloroplast. It participates in lipid metabolism; fatty acid biosynthesis. In terms of biological role, carrier of the growing fatty acid chain in fatty acid biosynthesis. This chain is Acyl carrier protein 4, chloroplastic (ACL1), found in Cuphea lanceolata (Cigar flower).